The primary structure comprises 497 residues: Serine/threonine-protein kinase 3 (497 aa).

Met1 carries the post-translational modification N-acetylmethionine. The segment at 1-20 (MEQPPASKSKLKKLSEDSLT) is disordered. Ser15 carries the phosphoserine modification. The Protein kinase domain occupies 27 to 278 (FDVLEKLGEG…ATQLLQHPFI (252 aa)). Residues 33–41 (LGEGSYGSV) and Lys56 each bind ATP. Phosphothreonine; by PKB/AKT1 is present on Thr117. Residue Asp146 is the Proton acceptor of the active site. The Mg(2+) site is built by Asn151 and Asp164. Thr180 carries the post-translational modification Phosphothreonine; by autocatalysis. The stretch at 287 to 328 (LRDLIAEAMEIKAKRHEEQQRELEEEEENSDEDELDSHTMVK) forms a coiled coil. Disordered regions lie at residues 301 to 343 (RHEE…TSTM) and 368 to 394 (NSEE…SPQV). Residues 309-321 (LEEEEENSDEDEL) are compositionally biased toward acidic residues. Ser316 carries the phosphoserine modification. Positions 326-343 (MVKTSSESVGTMRATSTM) are enriched in polar residues. Thr336 bears the Phosphothreonine mark. A coiled-coil region spans residues 366–387 (VINSEEEEEEEEEEEEDGTMKR). The span at 369 to 382 (SEEEEEEEEEEEED) shows a compositional bias: acidic residues. The residue at position 384 (Thr384) is a Phosphothreonine. Residue Thr390 is modified to Phosphothreonine; by PKB/AKT1. Residues Ser391 and Ser450 each carry the phosphoserine modification. The SARAH domain occupies 443-490 (FDFLKNLSLEELQMRLKALDPMMEREIEELHQRYSAKRQPILDAMDAK). The stretch at 448 to 479 (NLSLEELQMRLKALDPMMEREIEELHQRYSAK) forms a coiled coil.

This sequence belongs to the protein kinase superfamily. STE Ser/Thr protein kinase family. STE20 subfamily. In terms of assembly, homodimer; mediated via the coiled-coil region. Interacts with NORE1, which inhibits autoactivation. Interacts with and stabilizes SAV1. Interacts with RAF1, which prevents dimerization and phosphorylation. Interacts with RASSF1. Interacts (via SARAH domain) with isoform 1 of NEK2. Interacts with ESR1 only in the presence of SAV1. Interacts with PKB/AKT1. Forms a tripartite complex with MOBKL1B and STK38. Interacts with RASSF2 (via SARAH domain). Interacts with DLG5 (via PDZ domain 3). Interacts with LATS1; this interaction is inhibited in the presence of DLG5. Interacts with MARK3 in the presence of DLG5. Interacts with RASSF5; this interaction inhibits STK3 autoactivation through heterodimerization. Interacts (when phosphorylated) with SLMAP (via FHA domain); the interaction associates STK3 with the STRIPAK complex. It depends on Mg(2+) as a cofactor. Post-translationally, autophosphorylated on two residues Thr-174 and Thr-180, leading to activation. Phosphorylation at Thr-117 and Thr-390 by PKB/AKT1, leads to inhibition of its: cleavage, kinase activity, autophosphorylation at Thr-180, binding to RASSF1 and nuclear translocation, and increase in its binding to RAF1. Phosphorylated at Ser-15 by PLK1, leading to activation. In terms of processing, proteolytically cleaved by caspase-3 during apoptosis. Proteolytic cleavage results in kinase activation and nuclear translocation of the truncated form (MST1/N). Ubiquitinated by TRIM69; leading to its redistribution to the perinuclear cytoskeleton.

The protein resides in the cytoplasm. Its subcellular location is the nucleus. It carries out the reaction L-seryl-[protein] + ATP = O-phospho-L-seryl-[protein] + ADP + H(+). The catalysed reaction is L-threonyl-[protein] + ATP = O-phospho-L-threonyl-[protein] + ADP + H(+). Inhibited by the C-terminal non-catalytic region. Activated by caspase-cleavage. Full activation also requires homodimerization and autophosphorylation of Thr-180, which are inhibited by the proto-oncogene product RAF1. Activated by RASSF1 which acts by preventing its dephosphorylation. When autophosphorylated at Thr-180, recruits STRIPAK complex and promotes PP2A-mediated dephosphorylation and inactivation of STK3. Its function is as follows. Stress-activated, pro-apoptotic kinase which, following caspase-cleavage, enters the nucleus and induces chromatin condensation followed by internucleosomal DNA fragmentation. Key component of the Hippo signaling pathway which plays a pivotal role in organ size control and tumor suppression by restricting proliferation and promoting apoptosis. The core of this pathway is composed of a kinase cascade wherein STK3/MST2 and STK4/MST1, in complex with its regulatory protein SAV1, phosphorylates and activates LATS1/2 in complex with its regulatory protein MOB1, which in turn phosphorylates and inactivates YAP1 oncoprotein and WWTR1/TAZ. Phosphorylation of YAP1 by LATS2 inhibits its translocation into the nucleus to regulate cellular genes important for cell proliferation, cell death, and cell migration. STK3/MST2 and STK4/MST1 are required to repress proliferation of mature hepatocytes, to prevent activation of facultative adult liver stem cells (oval cells), and to inhibit tumor formation. Phosphorylates NKX2-1. Phosphorylates NEK2 and plays a role in centrosome disjunction by regulating the localization of NEK2 to centrosomes, and its ability to phosphorylate CROCC and CEP250. In conjunction with SAV1, activates the transcriptional activity of ESR1 through the modulation of its phosphorylation. Positively regulates RAF1 activation via suppression of the inhibitory phosphorylation of RAF1 on 'Ser-259'. Phosphorylates MOBKL1A and RASSF2. Phosphorylates MOBKL1B on 'Thr-74'. Acts cooperatively with MOBKL1B to activate STK38. The protein is Serine/threonine-protein kinase 3 (Stk3) of Mus musculus (Mouse).